A 385-amino-acid chain; its full sequence is 4-hydroxy-3-methylbut-2-en-1-yl diphosphate synthase (flavodoxin) 1 (385 aa).

Residues C280, C283, C315, and E322 each contribute to the [4Fe-4S] cluster site.

This sequence belongs to the IspG family. [4Fe-4S] cluster serves as cofactor.

The catalysed reaction is (2E)-4-hydroxy-3-methylbut-2-enyl diphosphate + oxidized [flavodoxin] + H2O + 2 H(+) = 2-C-methyl-D-erythritol 2,4-cyclic diphosphate + reduced [flavodoxin]. Its pathway is isoprenoid biosynthesis; isopentenyl diphosphate biosynthesis via DXP pathway; isopentenyl diphosphate from 1-deoxy-D-xylulose 5-phosphate: step 5/6. Converts 2C-methyl-D-erythritol 2,4-cyclodiphosphate (ME-2,4cPP) into 1-hydroxy-2-methyl-2-(E)-butenyl 4-diphosphate. The protein is 4-hydroxy-3-methylbut-2-en-1-yl diphosphate synthase (flavodoxin) 1 of Streptomyces avermitilis (strain ATCC 31267 / DSM 46492 / JCM 5070 / NBRC 14893 / NCIMB 12804 / NRRL 8165 / MA-4680).